A 523-amino-acid chain; its full sequence is Sensory neuron membrane protein 1 (523 aa).

At 1-11 (MQLPRELKYAA) the chain is on the cytoplasmic side. Residues 12–32 (IAGGVALFGLIFGWVLFPTIL) form a helical membrane-spanning segment. Over 33–458 (KSQLKKEMAL…HQLFIPKRVV (426 aa)) the chain is Extracellular. Residues Asn67 and Asn229 are each glycosylated (N-linked (GlcNAc...) asparagine). 3 disulfides stabilise this stretch: Cys268/Cys333, Cys297/Cys352, and Cys335/Cys341. Asn440 carries N-linked (GlcNAc...) asparagine glycosylation. Residues 459-479 (GVLRWWMVSFGSLGAVIGIVF) traverse the membrane as a helical segment. At 480 to 523 (HFRDHIMRLAVSGDTKVSKVTPEEEEQKDISVIGQAQEPAKVNI) the chain is on the cytoplasmic side.

It belongs to the CD36 family.

The protein localises to the cell membrane. In terms of biological role, plays an olfactory role that is not restricted to pheromone sensitivity. The chain is Sensory neuron membrane protein 1 from Helicoverpa armigera (Cotton bollworm).